Here is a 358-residue protein sequence, read N- to C-terminus: Serine/threonine-protein phosphatase 2A activator (358 aa).

Residues 1–20 (MAEGERQPPPDSSEEAPPAT) are disordered. Residue alanine 2 is modified to N-acetylalanine. Residues arginine 183, threonine 188, and glycine 189 each coordinate ATP. Mg(2+)-binding residues include glycine 243 and aspartate 249. Residues proline 339, glutamine 342, and histidine 343 each contribute to the ATP site.

Belongs to the PTPA-type PPIase family. In terms of assembly, associates with PP2A heterodimeric core enzyme PP2A(D), composed of a 36 kDa catalytic subunit (subunit C) and a 65 kDa constant regulatory subunit (PR65 or subunit A). Interacts with the catalytic subunit PPP2CA (via C-terminus). Interacts with PPP2CB. In terms of tissue distribution, widely expressed.

Its subcellular location is the cytoplasm. The protein localises to the nucleus. It carries out the reaction [protein]-peptidylproline (omega=180) = [protein]-peptidylproline (omega=0). In terms of biological role, PPIases accelerate the folding of proteins. It catalyzes the cis-trans isomerization of proline imidic peptide bonds in oligopeptides. Acts as a regulatory subunit for serine/threonine-protein phosphatase 2A (PP2A). Modulates PP2A activity or substrate specificity, probably by inducing a conformational change in the catalytic subunit, a proposed direct target of the PPIase. Can reactivate inactive phosphatase PP2A-phosphatase methylesterase complexes (PP2A(i)) in presence of ATP and Mg(2+). Reversibly stimulates the variable phosphotyrosyl phosphatase activity of PP2A core heterodimer PP2A(D) in presence of ATP and Mg(2+) (in vitro). The phosphotyrosyl phosphatase activity is dependent of an ATPase activity of the PP2A(D):PPP2R4 complex. Is involved in apoptosis; the function appears to be independent from PP2A. The chain is Serine/threonine-protein phosphatase 2A activator from Homo sapiens (Human).